Consider the following 66-residue polypeptide: uncharacterized protein (66 aa).

A compositionally biased stretch (low complexity) spans 1 to 20 (MTIINSISNFGSNNSFSNNN). Residues 1-47 (MTIINSISNFGSNNSFSNNNTVNQKSVIKRSKQMKNDNTSIGSSFKN) form a disordered region. The segment covering 36 to 47 (NDNTSIGSSFKN) has biased composition (polar residues).

This is an uncharacterized protein from Dictyostelium discoideum (Social amoeba).